We begin with the raw amino-acid sequence, 166 residues long: Transcription antitermination protein NusB (166 aa).

Belongs to the NusB family.

Its function is as follows. Involved in transcription antitermination. Required for transcription of ribosomal RNA (rRNA) genes. Binds specifically to the boxA antiterminator sequence of the ribosomal RNA (rrn) operons. The polypeptide is Transcription antitermination protein NusB (Chromohalobacter salexigens (strain ATCC BAA-138 / DSM 3043 / CIP 106854 / NCIMB 13768 / 1H11)).